Reading from the N-terminus, the 461-residue chain is Adenosylmethionine-8-amino-7-oxononanoate aminotransferase (461 aa).

Pyridoxal 5'-phosphate is bound at residue glycine 117–alanine 118. Position 150 (tyrosine 150) interacts with substrate. Aspartate 263 contacts pyridoxal 5'-phosphate. Substrate-binding residues include lysine 296, glycine 331, and arginine 426. N6-(pyridoxal phosphate)lysine is present on lysine 296.

This sequence belongs to the class-III pyridoxal-phosphate-dependent aminotransferase family. BioA subfamily. As to quaternary structure, homodimer. Pyridoxal 5'-phosphate is required as a cofactor.

It localises to the cytoplasm. The catalysed reaction is (8S)-8-amino-7-oxononanoate + S-adenosyl-L-methionine = S-adenosyl-4-methylsulfanyl-2-oxobutanoate + (7R,8S)-7,8-diammoniononanoate. The protein operates within cofactor biosynthesis; biotin biosynthesis; 7,8-diaminononanoate from 8-amino-7-oxononanoate (SAM route): step 1/1. Its function is as follows. Catalyzes the transfer of the alpha-amino group from S-adenosyl-L-methionine (SAM) to 7-keto-8-aminopelargonic acid (KAPA) to form 7,8-diaminopelargonic acid (DAPA). It is the only aminotransferase known to utilize SAM as an amino donor. This Methanocaldococcus jannaschii (strain ATCC 43067 / DSM 2661 / JAL-1 / JCM 10045 / NBRC 100440) (Methanococcus jannaschii) protein is Adenosylmethionine-8-amino-7-oxononanoate aminotransferase.